The following is a 510-amino-acid chain: Facilitated glucose transporter protein 1 (510 aa).

The tract at residues 1–29 (MSEKSRSDTSATASLSDSSKSPSSYSTPG) is disordered. Residues 1–46 (MSEKSRSDTSATASLSDSSKSPSSYSTPGTTTQKIIFPDGKLTKCL) lie on the Cytoplasmic side of the membrane. The span at 8–29 (DTSATASLSDSSKSPSSYSTPG) shows a compositional bias: low complexity. A helical transmembrane segment spans residues 47 to 67 (AFSAFVITLASFQFGYHIGCV). Over 68 to 100 (NAPGGLITEWIIGSHKDLFDKELSRENADLAWS) the chain is Extracellular. The helical transmembrane segment at 101–121 (VAVSVFAVGGMIGGLSSGWLA) threads the bilayer. Residues 122-127 (DKVGRR) lie on the Cytoplasmic side of the membrane. Residues 128–146 (GALFYNNLLALAAAALMGL) traverse the membrane as a helical segment. Over 147–160 (AKSVGAYPMVILGR) the chain is Extracellular. Residues 161–181 (LIIGLNCGFSSALVPMFLTEI) traverse the membrane as a helical segment. Residues 182–195 (SPNNLRGMLGSLHQ) lie on the Cytoplasmic side of the membrane. Residue glutamine 195 coordinates D-glucose. Residues 196–216 (LLVTIAILVSQIFGLPHLLGT) form a helical membrane-spanning segment. The Extracellular portion of the chain corresponds to 217-219 (GDR). Residues 220–240 (WPLIFAFTVVPAVLQLALLML) form a helical membrane-spanning segment. Residues 241–299 (CPESPKYTMAVRGQRNEAESALKKLRDTEDVSTEIEAMQEEATAAGVQEKPKMGDMFKG) are Cytoplasmic-facing. Residues 300 to 320 (ALLWPMSIAIMMMLAQQLSGI) form a helical membrane-spanning segment. D-glucose is bound by residues 315–316 (QQ), asparagine 321, and asparagine 352. The Extracellular portion of the chain corresponds to 321–341 (NVAMFYSTVIFRGAGLTGNEP). Residues 342–362 (FYATIGMGAVNVIMTLISVWL) form a helical membrane-spanning segment. At 363 to 373 (VDHPKFGRRSL) the chain is on the cytoplasmic side. The chain crosses the membrane as a helical span at residues 374–394 (LLAGLTGMFVSTLLLVGALTI). Over 395–409 (QNSGGDKWASYSAIG) the chain is Extracellular. Residues 410–430 (FVLLFVISFATGPGAIPWFFV) traverse the membrane as a helical segment. Tryptophan 427 contacts D-glucose. Over 431-445 (SEIFDSSARGNANSI) the chain is Cytoplasmic. A helical transmembrane segment spans residues 446–464 (AVMVNWAANLLVGLTFLPI). At 465-470 (NNLMQQ) the chain is on the extracellular side. The chain crosses the membrane as a helical span at residues 471–491 (YSFFIFSGFLAFFIFYTWKFV). The Cytoplasmic portion of the chain corresponds to 492–510 (PETKGKSIEQIQAEFEKRK).

It belongs to the major facilitator superfamily. Sugar transporter (TC 2.A.1.1) family. Glucose transporter subfamily. Isoform a is expressed in pharyngeal muscle and intestinal cells in both embryos and adults (at protein level).

It is found in the cell membrane. Its subcellular location is the basolateral cell membrane. In terms of biological role, facilitative glucose transporter that plays a role in glucose metabolism and regulation of longevity. May also play a role in lipid metabolism. Glucose transport activity of isoform a is competitively inhibited by mannose, galactose and fructose, suggesting ability to transport also other hexose sugars. The polypeptide is Facilitated glucose transporter protein 1 (Caenorhabditis elegans).